The sequence spans 389 residues: Stilbene synthase 3 (389 aa).

Residue 55–58 (KFQR) participates in substrate binding. Cys-164 is a catalytic residue. Residues Leu-267 and 305–307 (GGR) contribute to the substrate site.

This sequence belongs to the thiolase-like superfamily. Chalcone/stilbene synthases family. In terms of assembly, homodimer.

Its subcellular location is the cytoplasm. The enzyme catalyses 4-coumaroyl-CoA + 3 malonyl-CoA + 3 H(+) = trans-resveratrol + 4 CO2 + 4 CoA. It participates in phytoalexin biosynthesis; 3,4',5-trihydroxystilbene biosynthesis; 3,4',5-trihydroxystilbene from trans-4-coumarate: step 2/2. The sequence is that of Stilbene synthase 3 from Arachis hypogaea (Peanut).